The primary structure comprises 81 residues: Photosystem I iron-sulfur center (81 aa).

4Fe-4S ferredoxin-type domains are found at residues S2–W31 and G37–Y68. C11, C14, C17, C21, C48, C51, C54, and C58 together coordinate [4Fe-4S] cluster.

The eukaryotic PSI reaction center is composed of at least 11 subunits. It depends on [4Fe-4S] cluster as a cofactor.

The protein resides in the plastid. It localises to the chloroplast thylakoid membrane. It carries out the reaction reduced [plastocyanin] + hnu + oxidized [2Fe-2S]-[ferredoxin] = oxidized [plastocyanin] + reduced [2Fe-2S]-[ferredoxin]. Functionally, apoprotein for the two 4Fe-4S centers FA and FB of photosystem I (PSI); essential for photochemical activity. FB is the terminal electron acceptor of PSI, donating electrons to ferredoxin. The C-terminus interacts with PsaA/B/D and helps assemble the protein into the PSI complex. Required for binding of PsaD and PsaE to PSI. PSI is a plastocyanin/cytochrome c6-ferredoxin oxidoreductase, converting photonic excitation into a charge separation, which transfers an electron from the donor P700 chlorophyll pair to the spectroscopically characterized acceptors A0, A1, FX, FA and FB in turn. This Phaeodactylum tricornutum (strain CCAP 1055/1) protein is Photosystem I iron-sulfur center.